Consider the following 241-residue polypeptide: Carboxy-S-adenosyl-L-methionine synthase (241 aa).

S-adenosyl-L-methionine contacts are provided by residues Y38, 63-65 (GCS), 88-89 (DN), 116-117 (DI), N131, and R198.

It belongs to the class I-like SAM-binding methyltransferase superfamily. Cx-SAM synthase family. Homodimer.

The enzyme catalyses prephenate + S-adenosyl-L-methionine = carboxy-S-adenosyl-L-methionine + 3-phenylpyruvate + H2O. In terms of biological role, catalyzes the conversion of S-adenosyl-L-methionine (SAM) to carboxy-S-adenosyl-L-methionine (Cx-SAM). This Actinobacillus pleuropneumoniae serotype 3 (strain JL03) protein is Carboxy-S-adenosyl-L-methionine synthase.